We begin with the raw amino-acid sequence, 315 residues long: Biotin synthase (315 aa).

The Radical SAM core domain occupies 39-266 (NSLQFATLLS…KSAIRLTAGR (228 aa)). [4Fe-4S] cluster contacts are provided by cysteine 54, cysteine 58, and cysteine 61. Residues cysteine 98, cysteine 129, cysteine 189, and arginine 261 each contribute to the [2Fe-2S] cluster site.

Belongs to the radical SAM superfamily. Biotin synthase family. Homodimer. [4Fe-4S] cluster is required as a cofactor. [2Fe-2S] cluster serves as cofactor.

It catalyses the reaction (4R,5S)-dethiobiotin + (sulfur carrier)-SH + 2 reduced [2Fe-2S]-[ferredoxin] + 2 S-adenosyl-L-methionine = (sulfur carrier)-H + biotin + 2 5'-deoxyadenosine + 2 L-methionine + 2 oxidized [2Fe-2S]-[ferredoxin]. It functions in the pathway cofactor biosynthesis; biotin biosynthesis; biotin from 7,8-diaminononanoate: step 2/2. Functionally, catalyzes the conversion of dethiobiotin (DTB) to biotin by the insertion of a sulfur atom into dethiobiotin via a radical-based mechanism. In Legionella pneumophila (strain Corby), this protein is Biotin synthase.